The chain runs to 157 residues: Large ribosomal subunit protein uL22 (157 aa).

The protein belongs to the universal ribosomal protein uL22 family. As to quaternary structure, part of the 50S ribosomal subunit.

Its function is as follows. This protein binds specifically to 23S rRNA. It makes multiple contacts with different domains of the 23S rRNA in the assembled 50S subunit and ribosome. Functionally, the globular domain of the protein is located near the polypeptide exit tunnel on the outside of the subunit, while an extended beta-hairpin is found that lines the wall of the exit tunnel in the center of the 70S ribosome. The chain is Large ribosomal subunit protein uL22 from Methanocorpusculum labreanum (strain ATCC 43576 / DSM 4855 / Z).